We begin with the raw amino-acid sequence, 262 residues long: MTDSPADLRSAFRSGRVTPTAGLAPGFAQTNLIAVPQDWAYDVLLFTQRNPKPCPVLDVGDVGSRETVLAPGADITTDLPLYRVWKDGELADETADVSGLWRDDLVAFHIGCSFTFEHPVAAAGVPLRHVEQGSNVPMFVTNRECRPAGRMSGPMVVSMRPVPEHQVSLAAAISARMPAVHGGPVHIGDPTELGIADVAAPDFGDPVNFEPGDVPVFWACGVTPQAAVMASRLPFAITHAPGYMLITDIPDSEYVLEVPDAR.

The protein belongs to the D-glutamate cyclase family.

The polypeptide is Putative hydro-lyase RHA1_ro03475 (Rhodococcus jostii (strain RHA1)).